Here is a 142-residue protein sequence, read N- to C-terminus: MTEDIEQKKTATEVTPQEPKHIQEEEEQDVDMTGDEEQEEEPDREKIKLLTQATSEDGTSASFQIVEEDHTLGNALRYVIMKNPDVEFCGYSIPHPSENLLNIRIQTYGETTAVDALQKGLKDLMDLCDVVESKFTEKIKSM.

Positions 1-11 (MTEDIEQKKTA) are enriched in basic and acidic residues. Residues 1-45 (MTEDIEQKKTATEVTPQEPKHIQEEEEQDVDMTGDEEQEEEPDRE) are disordered. Thr-15 and Thr-33 each carry phosphothreonine. Residues 24–42 (EEEEQDVDMTGDEEQEEEP) show a composition bias toward acidic residues. A Glycyl lysine isopeptide (Lys-Gly) (interchain with G-Cter in ubiquitin) cross-link involves residue Lys-134.

Belongs to the archaeal Rpo11/eukaryotic RPB11/RPC19 RNA polymerase subunit family. As to quaternary structure, component of the RNA polymerase I (Pol I) and RNA polymerase III (Pol III) complexes. Component of the RNA polymerase I (Pol I) complex consisting of 14 subunits: RPA135, RPA190, RPC40, RPA14, RPB5, RPO26, RPA43, RPB8, RPA12, RPB10, RPC19, RPC10, RPA49 and RPA34. The complex is composed of a horseshoe-shaped core containing ten subunits (RPA135, RPA190, RPB5, RPO26, RPB8, RPB10, RPC10, RPA12, RPC19 and RPC40) where RPA135 and RPA190 form the DNA-binding cleft. Outside of the core, RPA14 and RPA43 form the stalk that mediates interactions with transcription initiation factors and newly synthesized RNA. Component of the RNA polymerase III (Pol III) complex consisting of 17 subunits. Directly interacts with the RPC40 subunit.

Its subcellular location is the nucleus. It localises to the nucleolus. DNA-dependent RNA polymerases catalyze the transcription of DNA into RNA using the four ribonucleoside triphosphates as substrates. Common core component of RNA polymerases I and III which synthesize ribosomal RNA precursors and small RNAs, such as 5S rRNA and tRNAs, respectively. This is DNA-directed RNA polymerases I and III subunit RPAC2 (RPC19) from Saccharomyces cerevisiae (strain ATCC 204508 / S288c) (Baker's yeast).